The primary structure comprises 215 residues: Large ribosomal subunit protein uL3 (215 aa).

Positions 136 to 155 are disordered; the sequence is GVSISHRSHGSTGQRQDPGK. Glutamine 151 is modified (N5-methylglutamine).

The protein belongs to the universal ribosomal protein uL3 family. In terms of assembly, part of the 50S ribosomal subunit. Forms a cluster with proteins L14 and L19. Methylated by PrmB.

In terms of biological role, one of the primary rRNA binding proteins, it binds directly near the 3'-end of the 23S rRNA, where it nucleates assembly of the 50S subunit. The chain is Large ribosomal subunit protein uL3 from Rickettsia rickettsii (strain Iowa).